The sequence spans 2190 residues: MASSALTPVAIVGYACKLPGDVSSPDDLWELCSRGRTGWGPTPSTRYSKDAYYHPAPGKHGCINTEGGYFLKEDPARFDAPFFNMTIQEATALDPQQRLLLECTFEAFENSGMTKEGIAGKDIGVFVGGSFADYEVNNTRDIDTAPTYQATGCAPAMQSNRLSYYFDLRGPSMTVDTACSSSLVALHSAMQSLRNGESSSAVVAAAHLNLTPDFFVTMSNTQLLNDAGKTFAFDHRAISGFARGEGAGSMILKPLDAAIRDGDVIRAVIHNSGVNQDGKTNGITVPNGRAQSDLIKQVYSKAGLDPAECGFSECHGTGTKVGDPIEVAGIHEALGAGRSPRNPLFIGSVKSNVGHLEGASGIVSVIKAAMMLEKGMVLPNANFETANPNIPLEQYNMKVPTSTRPWPRGKKYVSVSNYGFGGANAHVVLGAAPKGLKTTMTTIRSLEDAPEEPLCKLFVLSAHDSQALQKEITDLGVFLEQRPEVFEKLLAGNVAYTLGERRSHLPCRLAIAAVSSDELGQSLATTKVPTFRARNEPTLGFVFTGQGAQWATMGAELARDYPIFAAALDTADDTLKALGADFSLKEEMLKPADISLINAAHISQPACTALQIALTMLLSSWGIHPAAVVGHSSGEIGCAFAAGIIGLEDAMKIAYYRGQCMLSLKKKAVGKPQGTMMAVGTSAENVRPLLDAVSKGYITVACINSPASVTLSGDVEAVEELQPILTEKSIFNRQLKVGVAYHSAHLEPVVDEYLDLIKNIQPASTATATFYSSLLGRVAEASELTPEYWVQNLTSPVRFSGGLSAMARETGSKTIDHLVELGPHSALQGPIRDTLATIDAAKGKMHYVSVLARGQNASECALRMAGALYMKGLSLTFGEINFPRTKSVNQKLITDLPRYPFNHETRYWHESRLAQKHCFKEGGRNDLLGSLADWSNDLEPTWRNIVKLDDLPFLRSHKMQDMPVFPMAGYMGMALEAAARRAIARGVQFDRFEIREFVVSSALVFNEDTDVEMTITLKPYSEGLRGAASDLWDDYKICSWDAKRGWLQHCHGLVGVRNSPAANAVDAHRIQSASKAFEACKASIISASTETVDVQAMYNTLTTIGAGYGPVFTGLEPCQASDTTAHAQLVVPDTKSLMPKGYETELIVHPALLDQIIQIVWPIFGAGRQGLDTLYMPTFVKNFSISRNFASMLGNGLEVFGAGAPNNEAPEPTKFGFFVVGSSDASEPLVQFDGLTMTPLRESSGSSGPQARELCYKIDWQTVSDEDIGLEKSSSDASDTPIKADSLVSTPFTRDEAVCVVYNKATEKDLAAEVADNVWKTSGVQAELVTLSKVIPADKRVIFVSTGNNVLSGIDATMFGTLRQMLLSARKVLWIYKEGPDVDDVDGSMVVGFTRAIRSETSANIVTLGLQQATGKTLVENIFTVLTKTSADSPSTFKDDKEFILKGDDLLVPKVVDDEELNVRLHQESQDSVIYQQPFAQSDRRLKMVIATLGSLDSFYFVDDEPKPLNDNEVEIEVKATGMNFKDVVVSMGQLNQPYIGVECAGVIAAVGKKVTDVKVGQSVMAMTEGAYSTYARCLSTSVAPLPEKMDFTAASTIPVVFCTAYYGLFDLGRLTEGESVLIHAAAGGVGQAAIMLAQTCGAEIFATVGSLDKKQHIVKEYGIPEDHIFYSRDTAFGPAIRQVTGGKGVDVVLNSLGGDFLRESWDCLAPFGRFIEIGKADITKNSRLEMAQFEYNVSFASVDLTKVAAYKPKLMKRLLNDVEKLMSSGSIRPVGPITSYGINDVEAAFRSLQSGKSMGKLVIAPQSGDSVQAIAPKKTATLFKEDASYLIVGGTGGLGCSIARWMASRGAKHICLSSRRANITPRLEALITDLSILGTKVSVRACDVADAGSVETLVKDLKKESPIRGVIQGAMVLKDVLYEQMTLDDFSAVVNPKVAGTLNLHNSLGTSELDFFIALSSVAGVVGNRGQAAYAAANVFLDTFMAHRKAQGLPGTSLDLTAVSDVGYLADNSERAADVLRNLGGETIEESEILGLLTAAVTGKITASNNHVITGLKINPGSEPFWCHDAKFSNLLAAAASQSSAEGGNANIPLPQALKSAANGEKALEVLYGALVTKLAAVLMLSVEEMEPSAAVASYSLDSLAAIEVRNWIAREADANVQVLELLTSPSLMELAKLISKKSKLVSFE.

Residues L6–A431 enclose the Ketosynthase family 3 (KS3) domain. Active-site for beta-ketoacyl synthase activity residues include C179, H315, and H355. One can recognise a Malonyl-CoA:ACP transacylase (MAT) domain in the interval F541–A857. The N-terminal hotdog fold stretch occupies residues N925–A1061. The region spanning N925–S1246 is the PKS/mFAS DH domain. H957 acts as the Proton acceptor; for dehydratase activity in catalysis. Residues T1089–S1246 form a C-terminal hotdog fold region. The Proton donor; for dehydratase activity role is filled by D1154. Residues G1494–I1804 form the Enoyl reductase (ER) domain. The Ketoreductase (KR) domain occupies A1828–S2005. The 78-residue stretch at K2107 to S2184 folds into the Carrier domain. S2144 is subject to O-(pantetheine 4'-phosphoryl)serine.

Pantetheine 4'-phosphate is required as a cofactor.

Highly-reducing polyketide synthase; part of the gene cluster that mediates the biosynthesis of liamocins, glycolipids (also called heavy oils) composed of a single mannitol or arabitol headgroup linked to either three, four or even six 3,5-dihydroxydecanoic ester tail-groups. Within the pathway, PKS1 is responsible for biosynthesis of 3,5-dihydroxydecanoic acid from acetyl-CoA and malonyl-CoA. A phosphopantetheine transferase (PPTase) activates the HR-PKS. The esterase EST1 then catalyzes ester bond formation between 3,5-dihydroxydecanoic acid and mannitol (provided by the mannitol-1-phosphate 5-dehydrogenase and the NADP-dependent mannitol dehydrogenase) or arabinol (provided by the L-arabinitol 4-dehydrogenase). In Aureobasidium melanogenum (Aureobasidium pullulans var. melanogenum), this protein is Highly-reducing polyketide synthase 1.